Consider the following 117-residue polypeptide: Nascent polypeptide-associated complex protein (117 aa).

The 69-residue stretch at 9–77 (PKQLKQMQRA…ARERSLEAEM (69 aa)) folds into the NAC-A/B domain.

This sequence belongs to the NAC-alpha family. In terms of assembly, homodimer. Interacts with the ribosome. Binds ribosomal RNA.

Functionally, contacts the emerging nascent chain on the ribosome. In Methanothermobacter thermautotrophicus (strain ATCC 29096 / DSM 1053 / JCM 10044 / NBRC 100330 / Delta H) (Methanobacterium thermoautotrophicum), this protein is Nascent polypeptide-associated complex protein.